The chain runs to 182 residues: MGLRPAKIDRDVDKPAYTRREYIRGAPGPKITIFDMGNLSAEFEYEVSLHAEQAMQIRQNALEAIRIQVNRYLQKNVGRSNYHFKIRVYPFQVLRENPMATGRKADRYGNGMRRPFGKPIGLAARVKKDQKILTVWVNEQHLKFALGAMHRAKMKLPYSAYYRIYDREGNDVTTKVLSTMKR.

The protein belongs to the universal ribosomal protein uL16 family.

This Thermococcus gammatolerans (strain DSM 15229 / JCM 11827 / EJ3) protein is Large ribosomal subunit protein uL16.